Here is a 103-residue protein sequence, read N- to C-terminus: PTS system oligo-beta-mannoside-specific EIIB component (103 aa).

A PTS EIIB type-3 domain is found at 1–103 (MKKILLACSS…EQALSLMVNQ (103 aa)). Residue cysteine 8 is the Phosphocysteine intermediate of the active site. Residue cysteine 8 is modified to Phosphocysteine; by EIIA.

The protein localises to the cytoplasm. The catalysed reaction is D-cellobiose(out) + N(pros)-phospho-L-histidyl-[protein] = 6-phospho-beta-D-glucosyl-(1-&gt;4)-D-glucose(in) + L-histidyl-[protein]. Its function is as follows. The phosphoenolpyruvate-dependent sugar phosphotransferase system (sugar PTS), a major carbohydrate active transport system, catalyzes the phosphorylation of incoming sugar substrates concomitantly with their translocation across the cell membrane. The enzyme II GmuABC PTS system is involved in the transport of oligo-glucomannans such as cellobiose or mannobiose. This Bacillus subtilis (strain 168) protein is PTS system oligo-beta-mannoside-specific EIIB component.